The following is a 300-amino-acid chain: Ribosomal protein L11 methyltransferase (300 aa).

S-adenosyl-L-methionine-binding residues include Thr152, Gly173, Asp195, and Asn234.

It belongs to the methyltransferase superfamily. PrmA family.

Its subcellular location is the cytoplasm. It carries out the reaction L-lysyl-[protein] + 3 S-adenosyl-L-methionine = N(6),N(6),N(6)-trimethyl-L-lysyl-[protein] + 3 S-adenosyl-L-homocysteine + 3 H(+). In terms of biological role, methylates ribosomal protein L11. The protein is Ribosomal protein L11 methyltransferase of Burkholderia ambifaria (strain ATCC BAA-244 / DSM 16087 / CCUG 44356 / LMG 19182 / AMMD) (Burkholderia cepacia (strain AMMD)).